The primary structure comprises 78 residues: Beta-defensin 105A (78 aa).

The first 27 residues, 1–27 (MALIRKTFYFLFAVFFILVQLPSGCQA), serve as a signal peptide directing secretion. 3 cysteine pairs are disulfide-bonded: Cys43/Cys74, Cys53/Cys67, and Cys57/Cys73.

This sequence belongs to the beta-defensin family.

It localises to the secreted. Functionally, has antimicrobial activity. The polypeptide is Beta-defensin 105A (DEFB105A) (Gorilla gorilla gorilla (Western lowland gorilla)).